Consider the following 235-residue polypeptide: Ion-translocating oxidoreductase complex subunit E (235 aa).

Helical transmembrane passes span 63–83, 93–113, 117–137, 152–172, and 206–226; these read LGLG…ISLF, IPIY…LMNA, TLYQ…IIIG, IWDG…LGAL, and SFLL…LLAI.

Belongs to the NqrDE/RnfAE family. In terms of assembly, the complex is composed of six subunits: RnfA, RnfB, RnfC, RnfD, RnfE and RnfG.

The protein localises to the cell inner membrane. Functionally, part of a membrane-bound complex that couples electron transfer with translocation of ions across the membrane. The sequence is that of Ion-translocating oxidoreductase complex subunit E from Haemophilus influenzae (strain 86-028NP).